Here is a 115-residue protein sequence, read N- to C-terminus: Large ribosomal subunit protein uL22 (115 aa).

This sequence belongs to the universal ribosomal protein uL22 family. As to quaternary structure, part of the 50S ribosomal subunit.

This protein binds specifically to 23S rRNA; its binding is stimulated by other ribosomal proteins, e.g. L4, L17, and L20. It is important during the early stages of 50S assembly. It makes multiple contacts with different domains of the 23S rRNA in the assembled 50S subunit and ribosome. Functionally, the globular domain of the protein is located near the polypeptide exit tunnel on the outside of the subunit, while an extended beta-hairpin is found that lines the wall of the exit tunnel in the center of the 70S ribosome. This Coxiella burnetii (strain CbuG_Q212) (Coxiella burnetii (strain Q212)) protein is Large ribosomal subunit protein uL22.